The chain runs to 191 residues: dTTP/UTP pyrophosphatase (191 aa).

The active-site Proton acceptor is the Asp69.

It belongs to the Maf family. YhdE subfamily. A divalent metal cation is required as a cofactor.

The protein localises to the cytoplasm. It catalyses the reaction dTTP + H2O = dTMP + diphosphate + H(+). The catalysed reaction is UTP + H2O = UMP + diphosphate + H(+). Functionally, nucleoside triphosphate pyrophosphatase that hydrolyzes dTTP and UTP. May have a dual role in cell division arrest and in preventing the incorporation of modified nucleotides into cellular nucleic acids. This chain is dTTP/UTP pyrophosphatase, found in Desulforamulus reducens (strain ATCC BAA-1160 / DSM 100696 / MI-1) (Desulfotomaculum reducens).